The primary structure comprises 67 residues: Conotoxin Cl6.10 (67 aa).

The signal sequence occupies residues 1–24 (MKLTCVLIAAVLLLAVCQLDSADA). Residues 25-37 (TAYMRKDPSLRSP) constitute a propeptide that is removed on maturation. 3 disulfide bridges follow: C43–C57, C50–C61, and C56–C65.

This sequence belongs to the conotoxin O1 superfamily. Expressed by the venom duct.

The protein localises to the secreted. In Californiconus californicus (California cone), this protein is Conotoxin Cl6.10.